The sequence spans 240 residues: CD302 antigen (240 aa).

A C-type lectin domain is found at 40-160 (FQDSCYIFLQ…CEVSSVEGTL (121 aa)). Asn117 is a glycosylation site (N-linked (GlcNAc...) asparagine). Cys136 and Cys151 are joined by a disulfide. Residues 177 to 197 (ILISALVIASTVILTVLGAVI) traverse the membrane as a helical segment. The Cytoplasmic portion of the chain corresponds to 198 to 240 (WFLYKRNLDSGFTTVFSTAPQSPFNDDCVLVVAEENEYAVQFD).

It localises to the membrane. The protein resides in the cell projection. Its subcellular location is the filopodium. It is found in the cytoplasm. The protein localises to the cell cortex. Functionally, potential multifunctional C-type lectin receptor that may play roles in endocytosis and phagocytosis as well as in cell adhesion and migration. The chain is CD302 antigen from Sus scrofa (Pig).